A 263-amino-acid polypeptide reads, in one-letter code: Lens fiber major intrinsic protein (263 aa).

Topologically, residues 1–9 (MWELRSASF) are cytoplasmic. A helical membrane pass occupies residues 10 to 29 (WRAIFAEFFATLFYVFFGLG). At 30 to 41 (ASLRWTPGPLHV) the chain is on the extracellular side. A helical transmembrane segment spans residues 42–59 (LQVALAFGLALATLVQAV). Residues 60–61 (GH) lie on the Cytoplasmic side of the membrane. The segment at residues 62 to 77 (ISGAHVNPAVTFAFLV) is an intramembrane region (discontinuously helical). An NPA 1 motif is present at residues 68 to 70 (NPA). At 78 to 82 (GSQMS) the chain is on the cytoplasmic side. A helical transmembrane segment spans residues 83–106 (LLRAFCYMAAQLLGAVAGAAVLYS). Residues 107-127 (VTPPAVRGNLALNTLHPGVSV) lie on the Extracellular side of the membrane. A helical membrane pass occupies residues 128 to 148 (GQATTVEIFLTLQFVLCIFAT). Residues 149–156 (YDERRNGR) are Cytoplasmic-facing. Residues 157-175 (LGSVALAVGFSLTLGHLFG) traverse the membrane as a helical segment. Over 176–178 (MYY) the chain is Extracellular. The segment at residues 179–193 (TGAGMNPARSFAPAI) is an intramembrane region (discontinuously helical). An NPA 2 motif is present at residues 184 to 186 (NPA). Residues 194 to 200 (LTRNFTN) lie on the Extracellular side of the membrane. Residues 201–222 (HWVYWVGPIIGGGLGSLLYDFL) traverse the membrane as a helical segment. Residues 223–263 (LFPRLKSVSERLSILKGARPSDSNGQPEGTGEPVELKTQAL) are Cytoplasmic-facing. The tract at residues 227 to 237 (LKSVSERLSIL) is interaction with CALM. Serine 235, serine 243, and serine 245 each carry phosphoserine. Residues 240–263 (ARPSDSNGQPEGTGEPVELKTQAL) form a disordered region. At asparagine 246 the chain carries Deamidated asparagine.

It belongs to the MIP/aquaporin (TC 1.A.8) family. As to quaternary structure, homotetramer; each monomer provides an independent water pore. Two homotetramers on opposing membranes can dimerize, forming a cell-cell junction. Interacts with CALM; the calcium-calmodulin/CALM complex interacts with the cytoplasmic domains of two aquaporins, leading to channel closure. Interacts with BFSP1 (via C-terminus); prevents calcium-dependent inhibition of the water channel activity. In terms of processing, subject to partial proteolytic cleavage in the eye lens core. Partial proteolysis promotes interactions between tetramers from adjoining membranes. Fatty acylated at Met-1 and Lys-238. The acyl modifications, in decreasing order of ion abundance, are: oleoyl (C18:1) &gt; palmitoyl (C16:0) &gt; stearoyl (C18:0) &gt; eicosenoyl (C20:1) &gt; dihomo-gamma-linolenoyl (C20:3) &gt; palmitoleoyl (C16:1) &gt; eicosadienoyl (C20:2).

It is found in the cell membrane. It localises to the cell junction. The enzyme catalyses H2O(in) = H2O(out). Its activity is regulated as follows. The water channel activity is inhibited by calcium through calmodulin/CALM. Its function is as follows. Aquaporins form homotetrameric transmembrane channels, with each monomer independently mediating water transport across the plasma membrane along its osmotic gradient. Specifically expressed in lens fiber cells, this aquaporin is crucial for maintaining lens water homeostasis and transparency. Beyond water permeability, it also acts as a cell-to-cell adhesion molecule, forming thin junctions between lens fiber cells that are essential for maintaining the ordered structure and transparency of the lens. This Canis lupus familiaris (Dog) protein is Lens fiber major intrinsic protein.